A 454-amino-acid chain; its full sequence is tRNA-2-methylthio-N(6)-dimethylallyladenosine synthase (454 aa).

Residues 6–122 enclose the MTTase N-terminal domain; the sequence is RRYHITTYGC…LQDLLEQVAS (117 aa). [4Fe-4S] cluster contacts are provided by C15, C51, C85, C157, C161, and C164. A Radical SAM core domain is found at 143–384; that stretch reads RDSAVTAWVN…GVCAELRSQR (242 aa). Residues 383–447 form the TRAM domain; that stretch reads QRYANRIEEV…SFSLTGEPLS (65 aa).

This sequence belongs to the methylthiotransferase family. MiaB subfamily. Monomer. [4Fe-4S] cluster serves as cofactor.

The protein resides in the cytoplasm. The enzyme catalyses N(6)-dimethylallyladenosine(37) in tRNA + (sulfur carrier)-SH + AH2 + 2 S-adenosyl-L-methionine = 2-methylsulfanyl-N(6)-dimethylallyladenosine(37) in tRNA + (sulfur carrier)-H + 5'-deoxyadenosine + L-methionine + A + S-adenosyl-L-homocysteine + 2 H(+). Catalyzes the methylthiolation of N6-(dimethylallyl)adenosine (i(6)A), leading to the formation of 2-methylthio-N6-(dimethylallyl)adenosine (ms(2)i(6)A) at position 37 in tRNAs that read codons beginning with uridine. In Acaryochloris marina (strain MBIC 11017), this protein is tRNA-2-methylthio-N(6)-dimethylallyladenosine synthase.